The sequence spans 570 residues: Sulfite reductase [NADPH] hemoprotein beta-component (570 aa).

Residues cysteine 434, cysteine 440, cysteine 479, and cysteine 483 each coordinate [4Fe-4S] cluster. Position 483 (cysteine 483) interacts with siroheme.

This sequence belongs to the nitrite and sulfite reductase 4Fe-4S domain family. Alpha(8)-beta(8). The alpha component is a flavoprotein, the beta component is a hemoprotein. Siroheme is required as a cofactor. The cofactor is [4Fe-4S] cluster.

It carries out the reaction hydrogen sulfide + 3 NADP(+) + 3 H2O = sulfite + 3 NADPH + 4 H(+). Its pathway is sulfur metabolism; hydrogen sulfide biosynthesis; hydrogen sulfide from sulfite (NADPH route): step 1/1. In terms of biological role, component of the sulfite reductase complex that catalyzes the 6-electron reduction of sulfite to sulfide. This is one of several activities required for the biosynthesis of L-cysteine from sulfate. This is Sulfite reductase [NADPH] hemoprotein beta-component from Salmonella paratyphi A (strain ATCC 9150 / SARB42).